The following is a 1330-amino-acid chain: Protein PUTATIVE RECOMBINATION INITIATION DEFECT 1 (1330 aa).

The segment at 1310–1330 (REGRVSPIQEETRQMQTERIV) is disordered.

Interacts with SPO11-1. According to PubMed:28855712, may interact with SPO11-2; this is in contradiction with PubMed:9461215 which claims that it seems to not interact with SPO11-2. Binds to DFO, PRD3 and MTOPVIB. Facilitates an interaction between PRD3 and DFO. In terms of tissue distribution, expressed in flower buds.

Its subcellular location is the nucleus. In terms of biological role, involved in DNA cleavage that forms the double-strand breaks (DSB) that initiate meiotic recombination. The polypeptide is Protein PUTATIVE RECOMBINATION INITIATION DEFECT 1 (Arabidopsis thaliana (Mouse-ear cress)).